The chain runs to 411 residues: Mitogen-activated protein kinase 8 (411 aa).

A Protein kinase domain is found at 26–321 (YQNLKPIGSG…VDEALQHPYI (296 aa)). ATP contacts are provided by residues 32 to 40 (IGSGAQGIV) and lysine 55. At cysteine 116 the chain carries S-nitrosocysteine; in inhibited form. Aspartate 151 functions as the Proton acceptor in the catalytic mechanism. At threonine 183 the chain carries Phosphothreonine; by MAP2K7. Positions 183-185 (TPY) match the TXY motif. At tyrosine 185 the chain carries Phosphotyrosine; by MAP2K4. Residues 368–411 (KNGVIRGQPSPLGAAVINGSQHPVSSPSVNDMSSMSTDPTLASD) form a disordered region. The residue at position 377 (serine 377) is a Phosphoserine. The segment covering 390 to 403 (PVSSPSVNDMSSMS) has biased composition (low complexity).

It belongs to the protein kinase superfamily. CMGC Ser/Thr protein kinase family. MAP kinase subfamily. As to quaternary structure, forms a complex with MAPK8IP1 and ARHGEF28. Found in a complex with SH3RF1, RAC1, MAP3K11/MLK3, MAP2K7/MKK7 and MAPK8IP1/JIP1. Found in a complex with SH3RF1, RAC2, MAP3K7/TAK1, MAP2K7/MKK7, MAPK8IP1/JIP1 and MAPK9/JNK2. Binds to at least four scaffolding proteins, MAPK8IP1/JIP-1, MAPK8IP2/JIP-2, MAPK8IP3/JIP-3/JSAP1 and SPAG9/MAPK8IP4/JIP-4. These proteins also bind other components of the JNK signaling pathway. Interacts with TP53, WWOX. Interacts with JAMP. Interacts with NFATC4. Interacts (phosphorylated form) with NFE2; the interaction phosphorylates NFE2 in undifferentiated cells. Interacts with MECOM; regulates JNK signaling. Interacts with PIN1; this interaction mediates MAPK8 conformational changes leading to the binding of MAPK8 to its substrates. Interacts with HSF1 (via D domain and preferentially with hyperphosphorylated form); this interaction occurs under both normal growth conditions and immediately upon heat shock. Interacts with STMN2, STMN3 and STMN4. Interacts with GRIPAP1. Interacts with POU5F1; phosphorylates POU5F1 at 'Ser-347'. Interacts with HSF4. Requires Mg(2+) as cofactor. Post-translationally, dually phosphorylated on Thr-183 and Tyr-185 by MAP2K7 and MAP2K4, which activates the enzyme. Phosphorylated by TAOK2. Phosphorylated form is more concentrated at synapses than none-phosphorylated. Nitrosylated upon IFN-gamma-induced endogenous NO production, which inhibits the enzyme. May be phosphorylated at Thr-183 and Tyr-185 by MAP3K1/MEKK1.

The protein resides in the cytoplasm. It localises to the nucleus. It is found in the synapse. It carries out the reaction L-seryl-[protein] + ATP = O-phospho-L-seryl-[protein] + ADP + H(+). The enzyme catalyses L-threonyl-[protein] + ATP = O-phospho-L-threonyl-[protein] + ADP + H(+). Its activity is regulated as follows. Activated by threonine and tyrosine phosphorylation by either of two dual specificity kinases, MAP2K4 and MAP2K7. MAP2K4 shows a strong preference for Tyr-185 while MAP2K7 phosphorylates Tyr-183 preferentially. Inhibited by dual specificity phosphatases, such as DUSP1. Inhibited by SERPINB3. Inhibited by IFN-gamma-induced S-nitrosylation. In terms of biological role, serine/threonine-protein kinase involved in various processes such as cell proliferation, differentiation, migration, transformation and programmed cell death. Extracellular stimuli such as pro-inflammatory cytokines or physical stress stimulate the stress-activated protein kinase/c-Jun N-terminal kinase (SAP/JNK) signaling pathway. In this cascade, two dual specificity kinases MAP2K4/MKK4 and MAP2K7/MKK7 phosphorylate and activate MAPK8/JNK1. In turn, MAPK8/JNK1 phosphorylates a number of transcription factors, primarily components of AP-1 such as JUN, JDP2 and ATF2 and thus regulates AP-1 transcriptional activity. Phosphorylates the replication licensing factor CDT1, inhibiting the interaction between CDT1 and the histone H4 acetylase HBO1 to replication origins. Loss of this interaction abrogates the acetylation required for replication initiation. Promotes stressed cell apoptosis by phosphorylating key regulatory factors including p53/TP53 and Yes-associates protein YAP1. In T-cells, MAPK8 and MAPK9 are required for polarized differentiation of T-helper cells into Th1 cells. Contributes to the survival of erythroid cells by phosphorylating the antagonist of cell death BAD upon EPO stimulation. Mediates starvation-induced BCL2 phosphorylation, BCL2 dissociation from BECN1, and thus activation of autophagy. Phosphorylates STMN2 and hence regulates microtubule dynamics, controlling neurite elongation in cortical neurons. In the developing brain, through its cytoplasmic activity on STMN2, negatively regulates the rate of exit from multipolar stage and of radial migration from the ventricular zone. Phosphorylates several other substrates including heat shock factor protein 4 (HSF4), the deacetylase SIRT1, ELK1, or the E3 ligase ITCH. Phosphorylates the CLOCK-BMAL1 heterodimer and plays a role in the regulation of the circadian clock. Phosphorylates the heat shock transcription factor HSF1, suppressing HSF1-induced transcriptional activity. Phosphorylates POU5F1, which results in the inhibition of POU5F1's transcriptional activity and enhances its proteasomal degradation. Phosphorylates JUND and this phosphorylation is inhibited in the presence of MEN1. In neurons, phosphorylates SYT4 which captures neuronal dense core vesicles at synapses. Phosphorylates EIF4ENIF1/4-ET in response to oxidative stress, promoting P-body assembly. Phosphorylates SIRT6 in response to oxidative stress, stimulating its mono-ADP-ribosyltransferase activity. Phosphorylates NLRP3, promoting assembly of the NLRP3 inflammasome. Phosphorylates ALKBH5 in response to reactive oxygen species (ROS), promoting ALKBH5 sumoylation and inactivation. This Rattus norvegicus (Rat) protein is Mitogen-activated protein kinase 8 (Mapk8).